The following is a 268-amino-acid chain: Ribosomal RNA small subunit methyltransferase A (268 aa).

Asn-23, Ile-25, Gly-50, Glu-72, Asp-97, and Asn-116 together coordinate S-adenosyl-L-methionine.

This sequence belongs to the class I-like SAM-binding methyltransferase superfamily. rRNA adenine N(6)-methyltransferase family. RsmA subfamily.

Its subcellular location is the cytoplasm. The enzyme catalyses adenosine(1518)/adenosine(1519) in 16S rRNA + 4 S-adenosyl-L-methionine = N(6)-dimethyladenosine(1518)/N(6)-dimethyladenosine(1519) in 16S rRNA + 4 S-adenosyl-L-homocysteine + 4 H(+). Functionally, specifically dimethylates two adjacent adenosines (A1518 and A1519) in the loop of a conserved hairpin near the 3'-end of 16S rRNA in the 30S particle. May play a critical role in biogenesis of 30S subunits. This Rickettsia bellii (strain RML369-C) protein is Ribosomal RNA small subunit methyltransferase A.